The chain runs to 856 residues: Rab effector MyRIP (856 aa).

A RabBD domain is found at 4–124 (KLDLSGLTDD…TQSLEWFYNN (121 aa)). The FYVE-type zinc finger occupies 63–105 (CCMRCCSPFTFLVNARRRCGECKFSVCKSCCSYQKHEKLWVCC). The segment at 143–560 (RKHRLESGAC…AQVSDNVSET (418 aa)) is myosin-binding. The PRKAR2A-binding stretch occupies residues 193–209 (VALRVAEEAIEEAISKA). Positions 232 to 248 (LTEELAGTILQRIIRKQ) are negative regulation of PRKAR2A-binding. Residues 252–294 (AELRAEEEEPEWPRSQSGSVKARGEGTTAPPGRHKARATFRRS) are disordered. A phosphoserine mark is found at S299 and S351. Disordered regions lie at residues 351 to 578 (SPDG…SVEE), 592 to 625 (SEKETSSGEDQESESKAEPKNQKGSLSSEENNQG), 778 to 806 (RRDQKQRSQVQTIDTSRQQRRKLPAPPVK), and 826 to 856 (LLQGSSTNRPTASTGDTKDLMEPDLESAVMY). Residues 395–405 (IGSDSEEDFDY) are compositionally biased toward acidic residues. Low complexity-rich tracts occupy residues 427–437 (PTQAQSSGQGP) and 450–460 (SDSETSSTSSS). The actin-binding stretch occupies residues 495–856 (FNPQAAGGET…EPDLESAVMY (362 aa)). Polar residues-rich tracts occupy residues 551-574 (AQVSDNVSETDISNETQNSRSSTD), 613-625 (QKGSLSSEENNQG), 784-793 (RSQVQTIDTS), and 826-840 (LLQGSSTNRPTASTG).

In terms of assembly, binds RAB27A that has been activated by GTP-binding via its N-terminus. Binds MYO5A, MYO7A and F-actin. Interacts with PRKAR2A. Interacts with components of the exocyst complex, including EXOC3 and EXOC4. Detected in brain, skin, heart, lung, adrenal medulla, pancreas, intestine, liver, kidney, skeletal muscle and testis. Detected in cochlear and vestibular hair cells in the inner ear, and in photoreceptor and pigment epithelium cells in the retina.

It localises to the cytoplasm. It is found in the perinuclear region. Its subcellular location is the cytoplasmic vesicle. The protein localises to the secretory vesicle. The protein resides in the melanosome. Its function is as follows. Rab effector protein involved in melanosome transport. Serves as link between melanosome-bound RAB27A and the motor proteins MYO5A and MYO7A. May link RAB27A-containing vesicles to actin filaments. Functions as a protein kinase A-anchoring protein (AKAP). May act as a scaffolding protein that links PKA to components of the exocytosis machinery, thus facilitating exocytosis, including insulin release. This is Rab effector MyRIP (Myrip) from Mus musculus (Mouse).